The following is a 92-amino-acid chain: Co-chaperonin GroES (92 aa).

The protein belongs to the GroES chaperonin family. As to quaternary structure, heptamer of 7 subunits arranged in a ring. Interacts with the chaperonin GroEL.

Its subcellular location is the cytoplasm. Its function is as follows. Together with the chaperonin GroEL, plays an essential role in assisting protein folding. The GroEL-GroES system forms a nano-cage that allows encapsulation of the non-native substrate proteins and provides a physical environment optimized to promote and accelerate protein folding. GroES binds to the apical surface of the GroEL ring, thereby capping the opening of the GroEL channel. The chain is Co-chaperonin GroES from Thermotoga petrophila (strain ATCC BAA-488 / DSM 13995 / JCM 10881 / RKU-1).